A 276-amino-acid chain; its full sequence is Small ribosomal subunit protein uS5w (276 aa).

A compositionally biased stretch (basic and acidic residues) spans 1–15 (MAERGVERGGDRGDF). Positions 1–42 (MAERGVERGGDRGDFGRGFGGRGGGRGGPRGRGRRAGRAPEE) are disordered. The span at 16–28 (GRGFGGRGGGRGG) shows a compositional bias: gly residues. An S5 DRBM domain is found at 87-150 (LKDEVMKIMP…ILAKLSVVPI (64 aa)).

Belongs to the universal ribosomal protein uS5 family.

In Arabidopsis thaliana (Mouse-ear cress), this protein is Small ribosomal subunit protein uS5w (RPS2D).